We begin with the raw amino-acid sequence, 202 residues long: Probable nicotinate-nucleotide adenylyltransferase (202 aa).

This sequence belongs to the NadD family.

The catalysed reaction is nicotinate beta-D-ribonucleotide + ATP + H(+) = deamido-NAD(+) + diphosphate. It functions in the pathway cofactor biosynthesis; NAD(+) biosynthesis; deamido-NAD(+) from nicotinate D-ribonucleotide: step 1/1. Catalyzes the reversible adenylation of nicotinate mononucleotide (NaMN) to nicotinic acid adenine dinucleotide (NaAD). This is Probable nicotinate-nucleotide adenylyltransferase from Bacteroides thetaiotaomicron (strain ATCC 29148 / DSM 2079 / JCM 5827 / CCUG 10774 / NCTC 10582 / VPI-5482 / E50).